The primary structure comprises 335 residues: Eukaryotic translation initiation factor 3 subunit I (335 aa).

5 WD repeats span residues 8–47, 50–91, 145–184, 189–228, and 286–325; these read GHER…RLGT, GHQG…KVWD, CTES…QLEN, EFDN…ILKT, and GHFG…FDFM.

It belongs to the eIF-3 subunit I family. As to quaternary structure, component of the eukaryotic translation initiation factor 3 (eIF-3) complex.

The protein localises to the cytoplasm. In terms of biological role, component of the eukaryotic translation initiation factor 3 (eIF-3) complex, which is involved in protein synthesis of a specialized repertoire of mRNAs and, together with other initiation factors, stimulates binding of mRNA and methionyl-tRNAi to the 40S ribosome. The eIF-3 complex specifically targets and initiates translation of a subset of mRNAs involved in cell proliferation. This is Eukaryotic translation initiation factor 3 subunit I (tif34) from Aspergillus oryzae (strain ATCC 42149 / RIB 40) (Yellow koji mold).